Reading from the N-terminus, the 185-residue chain is MLKAKILFVGPCESGKTVLANFLTESSDITEYSPTQGVRILEFENPHVTSNNKGTGCEFELWDCGGDAKFESCWPALMKDAHGVVIVFNADIPSHRKEMEMWYSCFVQQQSLQDTQCMLIAHHKPGSGDDKGSLSLSPPLNKLKLVHSNLEDDPEEIRMEFIKYLKSIINSMSESRDREEMSIMT.

GTP is bound by residues 10–17 (GPCESGKT), 63–67 (DCGGD), and 123–126 (HKPG). At serine 137 the chain carries Phosphoserine.

Belongs to the small GTPase superfamily. Rab family. In terms of assembly, component of the IFT complex B, at least composed of IFT20, IFT22, IFT25, IFT27, IFT46, IFT52, TRAF3IP1/IFT54, IFT57, IFT74, IFT80, IFT81, and IFT88. Interacts with IFT88. Interacts with CFAP61.

It localises to the cell projection. The protein resides in the cilium. Small GTPase-like component of the intraflagellar transport (IFT) complex B. The chain is Intraflagellar transport protein 22 homolog (IFT22) from Macaca fascicularis (Crab-eating macaque).